A 279-amino-acid chain; its full sequence is Tryptophan synthase alpha chain (279 aa).

Active-site proton acceptor residues include Glu-50 and Asp-61.

This sequence belongs to the TrpA family. As to quaternary structure, tetramer of two alpha and two beta chains.

It carries out the reaction (1S,2R)-1-C-(indol-3-yl)glycerol 3-phosphate + L-serine = D-glyceraldehyde 3-phosphate + L-tryptophan + H2O. The protein operates within amino-acid biosynthesis; L-tryptophan biosynthesis; L-tryptophan from chorismate: step 5/5. Its function is as follows. The alpha subunit is responsible for the aldol cleavage of indoleglycerol phosphate to indole and glyceraldehyde 3-phosphate. This is Tryptophan synthase alpha chain from Brucella suis (strain ATCC 23445 / NCTC 10510).